A 217-amino-acid chain; its full sequence is Ribonuclease HII (217 aa).

Positions 27 to 216 (SQVAGVDEAG…VKESIQEGVC (190 aa)) constitute an RNase H type-2 domain. The a divalent metal cation site is built by Asp-33, Glu-34, and Asp-126.

Belongs to the RNase HII family. It depends on Mn(2+) as a cofactor. Mg(2+) serves as cofactor.

The protein resides in the cytoplasm. The enzyme catalyses Endonucleolytic cleavage to 5'-phosphomonoester.. Functionally, endonuclease that specifically degrades the RNA of RNA-DNA hybrids. This Chlamydia trachomatis serovar D (strain ATCC VR-885 / DSM 19411 / UW-3/Cx) protein is Ribonuclease HII (rnhB).